Here is a 328-residue protein sequence, read N- to C-terminus: Formimidoylglutamase (328 aa).

Positions 133, 159, 161, 163, 253, and 255 each coordinate Mn(2+).

The protein belongs to the arginase family. Requires Mn(2+) as cofactor.

The enzyme catalyses N-formimidoyl-L-glutamate + H2O = formamide + L-glutamate. It participates in amino-acid degradation; L-histidine degradation into L-glutamate; L-glutamate from N-formimidoyl-L-glutamate (hydrolase route): step 1/1. Its function is as follows. Catalyzes the conversion of N-formimidoyl-L-glutamate to L-glutamate and formamide. In Streptococcus pyogenes serotype M3 (strain ATCC BAA-595 / MGAS315), this protein is Formimidoylglutamase.